The sequence spans 314 residues: Nerylneryl diphosphate synthase CPT2, chloroplastic (314 aa).

A chloroplast-targeting transit peptide spans 1 to 61 (MNSSIVSQHF…MSDRGLSKIS (61 aa)). Residue aspartate 97 is part of the active site.

This sequence belongs to the UPP synthase family. Mg(2+) serves as cofactor. In terms of tissue distribution, expressed in stems. Expressed in petiolules. Expressed at low levels in leaf trichomes, old leaf and roots.

The protein resides in the plastid. It localises to the chloroplast. The catalysed reaction is 3 isopentenyl diphosphate + dimethylallyl diphosphate = nerylneryl diphosphate + 3 diphosphate. It carries out the reaction isopentenyl diphosphate + dimethylallyl diphosphate = neryl diphosphate + diphosphate. It catalyses the reaction neryl diphosphate + isopentenyl diphosphate = (2Z,6Z)-farnesyl diphosphate + diphosphate. The enzyme catalyses (2Z,6Z)-farnesyl diphosphate + isopentenyl diphosphate = nerylneryl diphosphate + diphosphate. Its function is as follows. Uses dimethylallyl diphosphate and isopentenyl diphosphate to catalyze the cis-prenyl chain elongation and produce the 20 carbon product nerylneryl diphosphate. This chain is Nerylneryl diphosphate synthase CPT2, chloroplastic, found in Solanum lycopersicum (Tomato).